Reading from the N-terminus, the 446-residue chain is uncharacterized protein (446 aa).

2 positions are modified to phosphoserine: serine 393 and serine 397. Positions 411–431 (LSSTERRDLDRVRDKQKKQDQ) are disordered.

It belongs to the IFRD family.

It is found in the cytoplasm. This is an uncharacterized protein from Schizosaccharomyces pombe (strain 972 / ATCC 24843) (Fission yeast).